The sequence spans 250 residues: 2,3-bisphosphoglycerate-dependent phosphoglycerate mutase (250 aa).

Residues 10 to 17, 23 to 24, Arg-62, 89 to 92, Lys-100, 116 to 117, and 185 to 186 contribute to the substrate site; these read RHGESQWN, TG, ERHY, RR, and GN. His-11 serves as the catalytic Tele-phosphohistidine intermediate. Glu-89 serves as the catalytic Proton donor/acceptor.

The protein belongs to the phosphoglycerate mutase family. BPG-dependent PGAM subfamily. As to quaternary structure, homodimer.

The catalysed reaction is (2R)-2-phosphoglycerate = (2R)-3-phosphoglycerate. Its pathway is carbohydrate degradation; glycolysis; pyruvate from D-glyceraldehyde 3-phosphate: step 3/5. Catalyzes the interconversion of 2-phosphoglycerate and 3-phosphoglycerate. The sequence is that of 2,3-bisphosphoglycerate-dependent phosphoglycerate mutase from Erwinia tasmaniensis (strain DSM 17950 / CFBP 7177 / CIP 109463 / NCPPB 4357 / Et1/99).